Reading from the N-terminus, the 371-residue chain is Beta-1,3-galactosyltransferase 4 (371 aa).

At 1-4 (MPLS) the chain is on the cytoplasmic side. The chain crosses the membrane as a helical; Signal-anchor for type II membrane protein span at residues 5-25 (LFRRVLLAVLLLVIIWTLFGP). Topologically, residues 26–371 (SGLGEELLSL…RCRFIAWFSS (346 aa)) are lumenal. An N-linked (GlcNAc...) asparagine glycan is attached at Asn-143.

Belongs to the glycosyltransferase 31 family. Expressed in heart, brain, spleen, kidney, lung and testis.

The protein localises to the golgi apparatus membrane. It catalyses the reaction a ganglioside GM2 (d18:1(4E)) + UDP-alpha-D-galactose = a ganglioside GM1 (d18:1(4E)) + UDP + H(+). The catalysed reaction is a ganglioside GM2 + UDP-alpha-D-galactose = a ganglioside GM1 + UDP + H(+). The enzyme catalyses a ganglioside GD2 (d18:1(4E)) + UDP-alpha-D-galactose = a ganglioside GD1b (d18:1(4E)) + UDP + H(+). It carries out the reaction a ganglioside GA2 (d18:1(4E)) + UDP-alpha-D-galactose = a ganglioside GA1 (d18:1(4E)) + UDP + H(+). It functions in the pathway protein modification; protein glycosylation. Functionally, involved in GM1/GD1B/GA1 ganglioside biosynthesis. The polypeptide is Beta-1,3-galactosyltransferase 4 (Mus musculus (Mouse)).